A 443-amino-acid polypeptide reads, in one-letter code: Proline--tRNA ligase (443 aa).

The protein belongs to the class-II aminoacyl-tRNA synthetase family. ProS type 2 subfamily. As to quaternary structure, homodimer.

The protein resides in the cytoplasm. It catalyses the reaction tRNA(Pro) + L-proline + ATP = L-prolyl-tRNA(Pro) + AMP + diphosphate. In terms of biological role, catalyzes the attachment of proline to tRNA(Pro) in a two-step reaction: proline is first activated by ATP to form Pro-AMP and then transferred to the acceptor end of tRNA(Pro). The polypeptide is Proline--tRNA ligase (Methylobacterium nodulans (strain LMG 21967 / CNCM I-2342 / ORS 2060)).